A 95-amino-acid polypeptide reads, in one-letter code: Large ribosomal subunit protein eL37z (95 aa).

Positions 19, 22, 34, and 37 each coordinate Zn(2+). A C4-type zinc finger spans residues 19-37 (CVRCGRRSFHIQKSRCSAC).

This sequence belongs to the eukaryotic ribosomal protein eL37 family. It depends on Zn(2+) as a cofactor.

Binds to the 23S rRNA. This chain is Large ribosomal subunit protein eL37z (RPL37A), found in Arabidopsis thaliana (Mouse-ear cress).